Reading from the N-terminus, the 201-residue chain is Large ribosomal subunit protein uL4 (201 aa).

The tract at residues 44–71 (RAQKTRAEVSGSGKKPWRQKGTGRARSG) is disordered.

The protein belongs to the universal ribosomal protein uL4 family. As to quaternary structure, part of the 50S ribosomal subunit.

One of the primary rRNA binding proteins, this protein initially binds near the 5'-end of the 23S rRNA. It is important during the early stages of 50S assembly. It makes multiple contacts with different domains of the 23S rRNA in the assembled 50S subunit and ribosome. In terms of biological role, forms part of the polypeptide exit tunnel. The polypeptide is Large ribosomal subunit protein uL4 (Proteus mirabilis (strain HI4320)).